The following is a 709-amino-acid chain: Homeobox-leucine zipper protein TF1 (709 aa).

A DNA-binding region (homeobox) is located at residues 66–125 (RKRRLQRLTGKQSEVLEGFFSICGHPDDGQKRHLSETTGLGLDQVKFWFQNKRTQVKTMC). Residues 166–187 (NQLAVEMERLMGQSEWLQQEIA) adopt a coiled-coil conformation. The START domain maps to 212–441 (GQHDQQMIAE…MARQSARMRD (230 aa)).

The protein belongs to the HD-ZIP homeobox family. Class IV subfamily.

It localises to the nucleus. Its function is as follows. Probable transcription factor. In Oryza sativa subsp. japonica (Rice), this protein is Homeobox-leucine zipper protein TF1 (TF1).